Consider the following 76-residue polypeptide: UPF0248 protein PAE2518 (76 aa).

Belongs to the UPF0248 family.

This is UPF0248 protein PAE2518 from Pyrobaculum aerophilum (strain ATCC 51768 / DSM 7523 / JCM 9630 / CIP 104966 / NBRC 100827 / IM2).